The primary structure comprises 747 residues: Ferrichrome outer membrane transporter/phage receptor (747 aa).

Positions 1–33 (MARSKTAQPKHSLRKIAVVVATAVSGMSVYAQA) are cleaved as a signal peptide. Residues 34–192 (AVEPKEDTIT…NMVSKRPTTE (159 aa)) lie on the Periplasmic side of the membrane. A TonB box motif is present at residues 40–47 (DTITVTAA). Residues 75-187 (PIQKVPQSIS…PGGLLNMVSK (113 aa)) form the TBDR plug domain. Ferrichrome contacts are provided by residues arginine 114, glutamine 133, and 148 to 149 (FY). The TBDR beta-barrel domain occupies 192–747 (EPLKEVQFKA…QVVATATFRF (556 aa)). Residues 193–201 (PLKEVQFKA) traverse the membrane as a beta stranded segment. Residues 202–206 (GTDSL) lie on the Extracellular side of the membrane. A beta stranded transmembrane segment spans residues 207-215 (FQTGFDFSD). Residues 216-222 (SLDDDGV) lie on the Periplasmic side of the membrane. Residues 223–231 (YSYRLTGLA) form a beta stranded membrane-spanning segment. Over 232–245 (RSANAQQKGSEEQR) the chain is Extracellular. A beta stranded transmembrane segment spans residues 246–255 (YAIAPAFTWR). Topologically, residues 256 to 259 (PDDK) are periplasmic. Residues 260 to 268 (TNFTFLSYF) form a beta stranded membrane-spanning segment. Residues 269 to 312 (QNEPETGYYGWLPKEGTVEPLPNGKRLPTDFNEGAKNNTYSRNE) are Extracellular-facing. 277–279 (YGW) contributes to the ferrichrome binding site. Residues 313–321 (KMVGYSFDH) form a beta stranded membrane-spanning segment. The Periplasmic segment spans residues 322–326 (EFNDT). The chain crosses the membrane as a beta stranded span at residues 327-335 (FTVRQNLRF). Residues 336-387 (AENKTSQNSVYGYGVCSDPANAYSKQCAALAPADKGHYLARKYVVDDEKLQN) lie on the Extracellular side of the membrane. 346 to 348 (YGY) is a ferrichrome binding site. A disulfide bridge connects residues cysteine 351 and cysteine 362. A beta stranded membrane pass occupies residues 388-396 (FSVDTQLQS). Residues 397–404 (KFATGDID) are Periplasmic-facing. The beta stranded transmembrane segment at 405–413 (HTLLTGVDF) threads the bilayer. Over 414 to 464 (MRMRNDINAWFGYDDSVPLLNLYNPVNTDFDFNAKDPANSGPYRILNKQKQ) the chain is Extracellular. Residue phenylalanine 424 coordinates ferrichrome. A beta stranded membrane pass occupies residues 465–473 (TGVYVQDQA). Residues 474–477 (QWDK) lie on the Periplasmic side of the membrane. Residues 478 to 486 (VLVTLGGRY) traverse the membrane as a beta stranded segment. Residues 487 to 508 (DWADQESLNRVAGTTDKRDDKQ) lie on the Extracellular side of the membrane. Residues 509–517 (FTWRGGVNY) traverse the membrane as a beta stranded segment. At 518-522 (LFDNG) the chain is on the periplasmic side. Residues 523 to 531 (VTPYFSYSE) traverse the membrane as a beta stranded segment. Topologically, residues 532 to 551 (SFEPSSQVGKDGNIFAPSKG) are extracellular. Residues 552 to 560 (KQYEVGVKY) traverse the membrane as a beta stranded segment. Over 561–565 (VPEDR) the chain is Periplasmic. A beta stranded transmembrane segment spans residues 566 to 574 (PIVVTGAVY). Residues 575–601 (NLTKTNNLMADPEGSFFSVEGGEIRAR) lie on the Extracellular side of the membrane. The beta stranded transmembrane segment at 602 to 610 (GVEIEAKAA) threads the bilayer. Topologically, residues 611-613 (LSA) are periplasmic. Residues 614 to 622 (SVNVVGSYT) form a beta stranded membrane-spanning segment. Over 623–645 (YTDAEYTTDTTYKGNTPAQVPKH) the chain is Extracellular. The beta stranded transmembrane segment at 646–654 (MASLWADYT) threads the bilayer. The Periplasmic segment spans residues 655–661 (FFDGPLS). Residues 662–670 (GLTLGTGGR) traverse the membrane as a beta stranded segment. Residues 671 to 689 (YTGSSYGDPANSFKVGSYT) are Extracellular-facing. Residues 690 to 698 (VVDALVRYD) form a beta stranded membrane-spanning segment. Over 699–705 (LARVGMA) the chain is Periplasmic. Residues 706-714 (GSNVALHVN) form a beta stranded membrane-spanning segment. The Extracellular segment spans residues 715 to 737 (NLFDREYVASCFNTYGCFWGAER). An intrachain disulfide couples cysteine 725 to cysteine 731. The TonB C-terminal box signature appears at 730-747 (GCFWGAERQVVATATFRF). Alanine 735 provides a ligand contact to ferrichrome. Residues 738–746 (QVVATATFR) traverse the membrane as a beta stranded segment. Residue phenylalanine 747 is a topological domain, periplasmic.

The protein belongs to the TonB-dependent receptor family. As to quaternary structure, monomer. Interacts with TonB. Interacts with Escherichia phage T5 receptor-binding protein pb5 (RBP-pb5); this interaction is necessary for the entry of the viral genome into the host cell.

Its subcellular location is the cell outer membrane. With respect to regulation, binding of ferrichrome or colicin M enhances the interaction between FhuA and TonB. TonB activates FhuA through interaction with the beta-barrel. Its function is as follows. Involved in the uptake of iron in complex with ferrichrome, a hydroxamate-type siderophore. Binds and transports ferrichrome-iron across the outer membrane. In addition to its role in ferrichrome-iron transport, transports the antibiotic albomycin, which is a structural analog of ferrichrome, and acts as a receptor for colicin M, microcin J25 and bacteriophages T1, T5, phi80 and UC-1. The energy source, which is required for all FhuA functions except infection by phage T5, is provided by the inner membrane TonB system. This chain is Ferrichrome outer membrane transporter/phage receptor, found in Escherichia coli (strain K12).